The chain runs to 131 residues: C-type natriuretic peptide 1 (131 aa).

Residues 1–22 (MLYPALLCAALLLIAPLGHTEG) form the signal peptide. A propeptide spanning residues 23–109 (RTLHPSPDAI…KRAVMDRSRR (87 aa)) is cleaved from the precursor. The cysteines at positions 115 and 131 are disulfide-linked.

It belongs to the natriuretic peptide family. As to expression, expressed in brain and to a low extent in atrium.

It is found in the secreted. Exhibits natriuretic and vasodepressant activity. Has a cGMP-stimulating activity. The sequence is that of C-type natriuretic peptide 1 from Oncorhynchus mykiss (Rainbow trout).